A 130-amino-acid polypeptide reads, in one-letter code: Cytochrome b-c1 complex subunit 7 (130 aa).

Belongs to the UQCRB/QCR7 family. Component of the ubiquinol-cytochrome c oxidoreductase (cytochrome b-c1 complex, complex III, CIII), a multisubunit enzyme composed of 3 respiratory subunits cytochrome b, cytochrome c1 and Rieske protein, 2 core protein subunits, and additional low-molecular weight protein subunits. The complex exists as an obligatory dimer and forms supercomplexes (SCs) in the inner mitochondrial membrane with cytochrome c oxidase (complex IV, CIV).

The protein resides in the mitochondrion inner membrane. Functionally, component of the ubiquinol-cytochrome c oxidoreductase, a multisubunit transmembrane complex that is part of the mitochondrial electron transport chain which drives oxidative phosphorylation. The respiratory chain contains 3 multisubunit complexes succinate dehydrogenase (complex II, CII), ubiquinol-cytochrome c oxidoreductase (cytochrome b-c1 complex, complex III, CIII) and cytochrome c oxidase (complex IV, CIV), that cooperate to transfer electrons derived from NADH and succinate to molecular oxygen, creating an electrochemical gradient over the inner membrane that drives transmembrane transport and the ATP synthase. The cytochrome b-c1 complex catalyzes electron transfer from ubiquinol to cytochrome c, linking this redox reaction to translocation of protons across the mitochondrial inner membrane, with protons being carried across the membrane as hydrogens on the quinol. In the process called Q cycle, 2 protons are consumed from the matrix, 4 protons are released into the intermembrane space and 2 electrons are passed to cytochrome c. The sequence is that of Cytochrome b-c1 complex subunit 7 from Schistosoma mansoni (Blood fluke).